A 219-amino-acid chain; its full sequence is Elongation factor Ts (219 aa).

The segment at 81–84 is involved in Mg(2+) ion dislocation from EF-Tu; it reads SDFV.

This sequence belongs to the EF-Ts family.

Its subcellular location is the cytoplasm. Associates with the EF-Tu.GDP complex and induces the exchange of GDP to GTP. It remains bound to the aminoacyl-tRNA.EF-Tu.GTP complex up to the GTP hydrolysis stage on the ribosome. In Koribacter versatilis (strain Ellin345), this protein is Elongation factor Ts.